We begin with the raw amino-acid sequence, 209 residues long: Thiamine-phosphate synthase (209 aa).

Residues 38-42 and Asn-70 contribute to the 4-amino-2-methyl-5-(diphosphooxymethyl)pyrimidine site; that span reads QYRDK. The Mg(2+) site is built by Asp-71 and Asp-89. Residue Thr-108 coordinates 4-amino-2-methyl-5-(diphosphooxymethyl)pyrimidine. A 2-[(2R,5Z)-2-carboxy-4-methylthiazol-5(2H)-ylidene]ethyl phosphate-binding site is contributed by 135–137; that stretch reads SNT. Position 138 (Lys-138) interacts with 4-amino-2-methyl-5-(diphosphooxymethyl)pyrimidine. Gly-165 contacts 2-[(2R,5Z)-2-carboxy-4-methylthiazol-5(2H)-ylidene]ethyl phosphate.

It belongs to the thiamine-phosphate synthase family. The cofactor is Mg(2+).

It carries out the reaction 2-[(2R,5Z)-2-carboxy-4-methylthiazol-5(2H)-ylidene]ethyl phosphate + 4-amino-2-methyl-5-(diphosphooxymethyl)pyrimidine + 2 H(+) = thiamine phosphate + CO2 + diphosphate. The catalysed reaction is 2-(2-carboxy-4-methylthiazol-5-yl)ethyl phosphate + 4-amino-2-methyl-5-(diphosphooxymethyl)pyrimidine + 2 H(+) = thiamine phosphate + CO2 + diphosphate. It catalyses the reaction 4-methyl-5-(2-phosphooxyethyl)-thiazole + 4-amino-2-methyl-5-(diphosphooxymethyl)pyrimidine + H(+) = thiamine phosphate + diphosphate. Its pathway is cofactor biosynthesis; thiamine diphosphate biosynthesis; thiamine phosphate from 4-amino-2-methyl-5-diphosphomethylpyrimidine and 4-methyl-5-(2-phosphoethyl)-thiazole: step 1/1. Its function is as follows. Condenses 4-methyl-5-(beta-hydroxyethyl)thiazole monophosphate (THZ-P) and 2-methyl-4-amino-5-hydroxymethyl pyrimidine pyrophosphate (HMP-PP) to form thiamine monophosphate (TMP). The sequence is that of Thiamine-phosphate synthase from Ectopseudomonas mendocina (strain ymp) (Pseudomonas mendocina).